The sequence spans 367 residues: Phospho-N-acetylmuramoyl-pentapeptide-transferase (367 aa).

10 helical membrane passes run 16 to 36 (LLLA…WVHF), 62 to 82 (TMGG…FNLV), 87 to 107 (MLLP…DDWL), 125 to 145 (FWIM…PQPY), 158 to 178 (VGEV…IVFI), 190 to 210 (SLAG…TFLA), 214 to 234 (LTNL…FLWY), 240 to 260 (QVFM…VVAL), 264 to 284 (QWIL…STLI), and 326 to 346 (FVLI…IFGS).

This sequence belongs to the glycosyltransferase 4 family. MraY subfamily. Mg(2+) serves as cofactor.

It is found in the cell membrane. It catalyses the reaction UDP-N-acetyl-alpha-D-muramoyl-L-alanyl-gamma-D-glutamyl-meso-2,6-diaminopimeloyl-D-alanyl-D-alanine + di-trans,octa-cis-undecaprenyl phosphate = di-trans,octa-cis-undecaprenyl diphospho-N-acetyl-alpha-D-muramoyl-L-alanyl-D-glutamyl-meso-2,6-diaminopimeloyl-D-alanyl-D-alanine + UMP. It functions in the pathway cell wall biogenesis; peptidoglycan biosynthesis. Its function is as follows. Catalyzes the initial step of the lipid cycle reactions in the biosynthesis of the cell wall peptidoglycan: transfers peptidoglycan precursor phospho-MurNAc-pentapeptide from UDP-MurNAc-pentapeptide onto the lipid carrier undecaprenyl phosphate, yielding undecaprenyl-pyrophosphoryl-MurNAc-pentapeptide, known as lipid I. The protein is Phospho-N-acetylmuramoyl-pentapeptide-transferase of Chloroflexus aggregans (strain MD-66 / DSM 9485).